Consider the following 502-residue polypeptide: Maturase K (502 aa).

The protein belongs to the intron maturase 2 family. MatK subfamily.

It localises to the plastid. The protein localises to the chloroplast. Its function is as follows. Usually encoded in the trnK tRNA gene intron. Probably assists in splicing its own and other chloroplast group II introns. Binds its homologous trnK precursor transcript. This chain is Maturase K, found in Sinapis alba (White mustard).